A 61-amino-acid polypeptide reads, in one-letter code: Small ribosomal subunit protein uS14 (61 aa).

4 residues coordinate Zn(2+): C24, C27, C40, and C43.

The protein belongs to the universal ribosomal protein uS14 family. Zinc-binding uS14 subfamily. As to quaternary structure, part of the 30S ribosomal subunit. Contacts proteins S3 and S10. The cofactor is Zn(2+).

In terms of biological role, binds 16S rRNA, required for the assembly of 30S particles and may also be responsible for determining the conformation of the 16S rRNA at the A site. The polypeptide is Small ribosomal subunit protein uS14 (Malacoplasma penetrans (strain HF-2) (Mycoplasma penetrans)).